The following is a 360-amino-acid chain: Dynein intermediate light chain dil1 (360 aa).

It belongs to the dynein light intermediate chain DYN3 family. In terms of assembly, the dynein complex consists of at least two heavy chains and a number of intermediate and light chains. Interacts with rga3, sec10, sec16, syp1, rvb2, spbc19c7.04c, spbc2f12.05 and spac3a11.10c. The N-terminal part is acetylated.

The protein localises to the cytoplasm. Its subcellular location is the cytoskeleton. In terms of biological role, component of the cytoplasmic dynein which acts as a motor for the intracellular retrograde motility of vesicles and organelles along microtubules. Promotes oscillatory nuclear movement and efficient pairing of homologous centromeres during meiotic prophase. The chain is Dynein intermediate light chain dil1 (dil1) from Schizosaccharomyces pombe (strain 972 / ATCC 24843) (Fission yeast).